Consider the following 212-residue polypeptide: Probable nicotinate-nucleotide adenylyltransferase (212 aa).

The protein belongs to the NadD family.

It catalyses the reaction nicotinate beta-D-ribonucleotide + ATP + H(+) = deamido-NAD(+) + diphosphate. The protein operates within cofactor biosynthesis; NAD(+) biosynthesis; deamido-NAD(+) from nicotinate D-ribonucleotide: step 1/1. Functionally, catalyzes the reversible adenylation of nicotinate mononucleotide (NaMN) to nicotinic acid adenine dinucleotide (NaAD). The protein is Probable nicotinate-nucleotide adenylyltransferase of Methylibium petroleiphilum (strain ATCC BAA-1232 / LMG 22953 / PM1).